Consider the following 319-residue polypeptide: Coproporphyrin III ferrochelatase 2 (319 aa).

Fe-coproporphyrin III is bound by residues Tyr-13, Arg-30, 46–47 (RY), Ser-54, and Tyr-125. Fe(2+) is bound by residues His-181 and Glu-262.

Belongs to the ferrochelatase family.

It is found in the cytoplasm. The catalysed reaction is Fe-coproporphyrin III + 2 H(+) = coproporphyrin III + Fe(2+). The protein operates within porphyrin-containing compound metabolism; protoheme biosynthesis. In terms of biological role, involved in coproporphyrin-dependent heme b biosynthesis. Catalyzes the insertion of ferrous iron into coproporphyrin III to form Fe-coproporphyrin III. This is Coproporphyrin III ferrochelatase 2 from Bacillus cereus (strain ZK / E33L).